We begin with the raw amino-acid sequence, 292 residues long: Shikimate dehydrogenase (NADP(+)) (292 aa).

Residues 25-27 and Thr-72 contribute to the shikimate site; that span reads SKS. Lys-76 functions as the Proton acceptor in the catalytic mechanism. Asn-97 and Asp-113 together coordinate shikimate. Residues 137–141, 161–166, and Met-230 each bind NADP(+); these read GAGGA and NRTQSK. Tyr-232 lines the shikimate pocket. An NADP(+)-binding site is contributed by Gly-254.

It belongs to the shikimate dehydrogenase family. Homodimer.

It carries out the reaction shikimate + NADP(+) = 3-dehydroshikimate + NADPH + H(+). The protein operates within metabolic intermediate biosynthesis; chorismate biosynthesis; chorismate from D-erythrose 4-phosphate and phosphoenolpyruvate: step 4/7. Functionally, involved in the biosynthesis of the chorismate, which leads to the biosynthesis of aromatic amino acids. Catalyzes the reversible NADPH linked reduction of 3-dehydroshikimate (DHSA) to yield shikimate (SA). The chain is Shikimate dehydrogenase (NADP(+)) from Shewanella sp. (strain ANA-3).